Reading from the N-terminus, the 71-residue chain is DNA-directed RNA polymerases II, IV and V subunit 10 (71 aa).

Zn(2+) is bound by residues Cys7, Cys10, Cys44, and Cys45.

The protein belongs to the archaeal Rpo10/eukaryotic RPB10 RNA polymerase subunit family. Component of the RNA polymerase II, IV and V complexes. Interacts with NRPD1.

It localises to the nucleus. Functionally, DNA-dependent RNA polymerase catalyzes the transcription of DNA into RNA using the four ribonucleoside triphosphates as substrates. Component of RNA polymerase II which synthesizes mRNA precursors and many functional non-coding RNAs. Pol II is the central component of the basal RNA polymerase II transcription machinery. It is composed of mobile elements that move relative to each other. Component of RNA polymerases IV and V which mediate short-interfering RNAs (siRNA) accumulation and subsequent RNA-directed DNA methylation-dependent (RdDM) transcriptional gene silencing (TGS) of endogenous repeated sequences, including transposable elements. The chain is DNA-directed RNA polymerases II, IV and V subunit 10 (NRPB10) from Arabidopsis thaliana (Mouse-ear cress).